An 890-amino-acid polypeptide reads, in one-letter code: MQQNHMSLSNMIKEVKEVFFHVPALLIPTRYREIYREIDRAPKLLEQSFYTIFIKVWNITEKVTVTDVFYYSSVEDPLGLQSPRHSRWAQNTDEEQRKQARIIIQSVYKPNSFIRITSNKFTRVLITSLFVLTYFQSNGVFQSFPYFESQINGFLFKKMNNINQLEINSTNTCIIKITDLLTHQKSKELLGNSLPTNSILRWKMHSKISDIKTIFNMPEKWIYLPLGLGLENSEQIFSYRNFDICNLTKNSSNIMKIKNNRTILDPKIDKYPLVLKNKENILFFHKLPIQFFLFPYIVLRIWLAPVFVLWWSYQFNSEEKENIKNNLKNIHDIEISTIQKFVAKAITFRDIGGMESLKQELATVAFLLKQKNYSNSYPMGYLFAGPPGTGKTLMAKAMSYEAETPYLYVEGSQFRCREEGVANARVDDLFKQIQNISPCILYIDEIDSIAERREEANKQLEQLKTIGDSIEGSNINIDQKPSDTVLMQFLIYMDGYKKRNDLIIIGATNRIETLDDAIMRPGRFDRQIVFSPPFFEERKDILRIFLRNTKALVDDTTKTMMAERSIGLNGCDLRLLADNILLLSALESRNQQKTIPVINEDTFDRALERVSRIRHIISNYELAFGKYDFYRTAYHEAGIALIHTLLPECRPVYSVKLFPKPLNDRYLEIERENLKVPSSDIISTNNIDYFVQKIVGLLAGRAAESILFDFYPGQISTYLNKTYDPNIQGAYNIAHHIVEFGLLDSVTGVIHYLNSENENNIKDPFVTKINDLIQNKVTLKTNRELRKYSQAASILDFNEFWYEQDYPWQFDFIKKQYIYSNESSRNLDMEIVSILHTLFQYTYDFLKSNEQLLDHLASLVLKNKSISQKEIHLVVNSYGIKIPTKTWKAW.

Gly-385 to Thr-392 is a binding site for ATP.

This sequence belongs to the Ycf2 family.

It is found in the plastid. The protein resides in the chloroplast stroma. Functionally, probable ATPase of unknown function. Its presence in a non-photosynthetic plant (Epifagus virginiana) and experiments in tobacco indicate that it has an essential function which is probably not related to photosynthesis. In Mesostigma viride (Green alga), this protein is Protein Ycf2 (ycf2).